We begin with the raw amino-acid sequence, 130 residues long: Chemotaxis protein CheY-3 (130 aa).

The Response regulatory domain maps to 10-127 (KILIVDDFST…TLKEKLDKIF (118 aa)). Mg(2+) is bound by residues aspartate 15, aspartate 16, aspartate 60, and asparagine 62. Residue aspartate 60 is modified to 4-aspartylphosphate.

Interacts with FliM. The cofactor is Mg(2+).

Its subcellular location is the cytoplasm. Acts as a response regulator to control chemotaxis. Involved in the transmission of sensory signals from the chemoreceptors to the flagellar motors. Switches the flagellar rotation by binding to the flagellar motor switch protein FliM. In its active (phosphorylated or acetylated) form, exhibits enhanced binding to a switch component, FliM, at the flagellar motor which induces a change from counterclockwise to clockwise flagellar rotation. The sequence is that of Chemotaxis protein CheY-3 from Vibrio cholerae serotype O1 (strain ATCC 39315 / El Tor Inaba N16961).